The sequence spans 174 residues: Nucleoside-triphosphatase THEP1 (174 aa).

ATP is bound by residues 7–14 (GRPGVGKT) and 94–101 (LIIVDEIG).

It belongs to the THEP1 NTPase family.

It carries out the reaction a ribonucleoside 5'-triphosphate + H2O = a ribonucleoside 5'-diphosphate + phosphate + H(+). Functionally, has nucleotide phosphatase activity towards ATP, GTP, CTP, TTP and UTP. May hydrolyze nucleoside diphosphates with lower efficiency. The polypeptide is Nucleoside-triphosphatase THEP1 (Thermotoga maritima (strain ATCC 43589 / DSM 3109 / JCM 10099 / NBRC 100826 / MSB8)).